Reading from the N-terminus, the 1009-residue chain is Type VII secretion system accessory factor EsaA (1009 aa).

The helical transmembrane segment at 7 to 27 (IYALIVTLIIIIAIVSMIFFV) threads the bilayer. The segment covering 680–697 (TFAEEPQEPKIDKGKNDE) has biased composition (basic and acidic residues). Positions 680 to 707 (TFAEEPQEPKIDKGKNDEFNTMSSNLDK) are disordered. 5 consecutive transmembrane segments (helical) span residues 822–842 (ISPT…AYIF), 869–889 (VITS…VGLI), 903–923 (KFIL…TYLL), 928–948 (SIGM…MNNL), and 979–999 (IGLV…LNMF).

This sequence belongs to the EsaA family. In terms of assembly, homodimer. Interacts with EssB.

The protein localises to the cell membrane. In terms of biological role, component of the type VII secretion system (Ess). Provides together with EssB and other components such as EssC and EssE a secretion plateform accross the cytoplasmic membrane in the host. This Staphylococcus aureus (strain USA300) protein is Type VII secretion system accessory factor EsaA.